The chain runs to 122 residues: Large ribosomal subunit protein uL18 (122 aa).

It belongs to the universal ribosomal protein uL18 family. As to quaternary structure, part of the 50S ribosomal subunit; part of the 5S rRNA/L5/L18/L25 subcomplex. Contacts the 5S and 23S rRNAs.

Its function is as follows. This is one of the proteins that bind and probably mediate the attachment of the 5S RNA into the large ribosomal subunit, where it forms part of the central protuberance. In Leptospira interrogans serogroup Icterohaemorrhagiae serovar copenhageni (strain Fiocruz L1-130), this protein is Large ribosomal subunit protein uL18.